The primary structure comprises 212 residues: Peptide methionine sulfoxide reductase MsrA (212 aa).

Residue Cys-52 is part of the active site.

This sequence belongs to the MsrA Met sulfoxide reductase family.

It catalyses the reaction L-methionyl-[protein] + [thioredoxin]-disulfide + H2O = L-methionyl-(S)-S-oxide-[protein] + [thioredoxin]-dithiol. The enzyme catalyses [thioredoxin]-disulfide + L-methionine + H2O = L-methionine (S)-S-oxide + [thioredoxin]-dithiol. In terms of biological role, has an important function as a repair enzyme for proteins that have been inactivated by oxidation. Catalyzes the reversible oxidation-reduction of methionine sulfoxide in proteins to methionine. The polypeptide is Peptide methionine sulfoxide reductase MsrA (Salmonella agona (strain SL483)).